The primary structure comprises 152 residues: Interleukin-3 (152 aa).

The signal sequence occupies residues 1–19 (MSRLPVLLLLQLLVRPGLQ). N-linked (GlcNAc...) asparagine glycosylation is found at Asn-34 and Asn-89. Cys-35 and Cys-103 are oxidised to a cystine.

It belongs to the IL-3 family. As to quaternary structure, monomer. As to expression, activated T-cells, mast cells, natural killer cells.

Its subcellular location is the secreted. Its function is as follows. Granulocyte/macrophage colony-stimulating factors are cytokines that act in hematopoiesis by controlling the production, differentiation, and function of 2 related white cell populations of the blood, the granulocytes and the monocytes-macrophages. This CSF induces granulocytes, macrophages, mast cells, stem cells, erythroid cells, eosinophils and megakaryocytes. The protein is Interleukin-3 (IL3) of Pan troglodytes (Chimpanzee).